The primary structure comprises 1041 residues: MRADLSTIQQTLTPEAAAALARAMDEAGRRRHGQTTPLHVAAALLAAPAGLLRQACARAASAAGVGGGGGAAAGAGAGAHPLHCRALELCFSVALDRLPAAAAAAAAAHGAGASPPVSNALVAALKRAQAQQRRGCPEAAQQPLLAVKVELEQLVLSILDDPSVSRVMREASFSSAAVKSIIEQSLSAPSPCPSAAASTTTAGPGPLSPSPSPLPRAGAANAYLNPRLAAAAAVASGGGGGGGDDARKVIDVMLKPTRRNPVLVGDAGPDAVLKEAIRRIPTAGFPALAGAKVLPLEAELAKLAGDKAAMAARIGDLGAVVERLLGEHGGVVLDLGDLKWLVDGPAAAASEGGKAAVAEMGRLLRRFGRAGVWAVCTAACTTYLRCKVYHPGMEAEWDLHAVPIARGGAPIAAAAAGSALRPGGSGILNSSMGMLSPALRPMPVTPTALRWPPPGSDQSPAAKPAMCLLCKGSYERELAKLEAEQTDKPASRPEAAKPGLPHWLQLSNDQNKAKEQELKLKRSKDELERKWRETCARIHSACPMAPALSVPLATFTPRPPVEPKLGVARGAAVPTLKMNPSWEKPSVAPTLELRKSPPASPVKTDLVLCRLDPGTNPAVENEQKESCEGLTALQKAKIAGISDIESFKRLLKGLTEKVSWQSDAASAIAAVVIQCRSGSGKRRNVGTRGDMWLLFVGPDQAGKRKMVNALSELMANTRPVVVNFGGDSRLGRVGNDGPNMGFWGKTALDRVTEAVRQNPFSVIVLEGIDQVDVVVHGKIKRAMETGRLPDSRGREVSLGNVIFVLTTNWVPEELKGSNVETLLRGEERMLESTSSSWQLELSIGDKQVKHRADWLCDDVRPAKLAKELSSSHGLSLDLNLAVGALDDTEGSHNSSDVSVEQEQEKGQLAVKRSTPAPGSDILELVDDAIVFRPVDFTPFRKTVTDCISAKFESVMGSSSSFRIDEDAVDWMVGSVWLTDEKIEDWAEKVLKPSIERLWHNVKHDSGRSIIRLTAVAAKALPRWGGGREGLPVAVTIAIDGM.

The region spanning 8-188 (IQQTLTPEAA…KSIIEQSLSA (181 aa)) is the Clp R domain. Repeat regions lie at residues 12 to 98 (LTPE…LDRL) and 117 to 188 (VSNA…SLSA). Low complexity predominate over residues 189-205 (PSPCPSAAASTTTAGPG). Disordered stretches follow at residues 189 to 214 (PSPC…PSPL), 482 to 513 (EAEQ…QNKA), and 889 to 913 (EGSH…VKRS). A compositionally biased stretch (basic and acidic residues) spans 482–495 (EAEQTDKPASRPEA). The segment covering 891–900 (SHNSSDVSVE) has biased composition (polar residues).

The protein belongs to the ClpA/ClpB family.

May act downstream of MAX2 to negatively regulate karrikins/strigolactone responses. Acts probably specifically in the karrikin pathway. May function in a transcriptional corepressor complex. This Oryza sativa subsp. japonica (Rice) protein is Protein SMAX1-like.